A 335-amino-acid chain; its full sequence is Beta-hexosaminidase (335 aa).

Substrate contacts are provided by residues Asp60, Arg68, Arg133, and 163–164 (KH). His176 serves as the catalytic Proton donor/acceptor. The active-site Nucleophile is the Asp247.

It belongs to the glycosyl hydrolase 3 family. NagZ subfamily. As to quaternary structure, monomer.

The protein localises to the cytoplasm. It carries out the reaction Hydrolysis of terminal non-reducing N-acetyl-D-hexosamine residues in N-acetyl-beta-D-hexosaminides.. It participates in cell wall biogenesis; peptidoglycan recycling. In terms of biological role, plays a role in peptidoglycan recycling by cleaving the terminal beta-1,4-linked N-acetylglucosamine (GlcNAc) from peptide-linked peptidoglycan fragments, giving rise to free GlcNAc, anhydro-N-acetylmuramic acid and anhydro-N-acetylmuramic acid-linked peptides. The polypeptide is Beta-hexosaminidase (Xylella fastidiosa (strain 9a5c)).